A 137-amino-acid chain; its full sequence is Holo-[acyl-carrier-protein] synthase (137 aa).

Mg(2+) contacts are provided by D7 and E58.

This sequence belongs to the P-Pant transferase superfamily. AcpS family. Requires Mg(2+) as cofactor.

Its subcellular location is the cytoplasm. It catalyses the reaction apo-[ACP] + CoA = holo-[ACP] + adenosine 3',5'-bisphosphate + H(+). Functionally, transfers the 4'-phosphopantetheine moiety from coenzyme A to a Ser of acyl-carrier-protein. The polypeptide is Holo-[acyl-carrier-protein] synthase (Chloroflexus aurantiacus (strain ATCC 29366 / DSM 635 / J-10-fl)).